The following is an 831-amino-acid chain: Periplasmic nitrate reductase (831 aa).

The tat-type signal signal peptide spans 1–29; the sequence is MKVSRRDFIKQTAIAATASVAGIPLGTEA. The 4Fe-4S Mo/W bis-MGD-type domain occupies 41 to 97; it reads LKWSKAPCRFCGTGCGVTVAVRDNKVVATQGDPQCEVNKGLNCVKGYFLSKIMYGQD. Positions 48, 51, 55, and 83 each coordinate [4Fe-4S] cluster. Mo-bis(molybdopterin guanine dinucleotide)-binding positions include Lys85, Gln152, Asn177, Cys181, 214–221, 245–249, 264–266, Met375, Gln379, Asn485, 511–512, Lys534, Asp561, and 721–730; these read WGSNMAEM, STFTH, QTD, SD, and TGRVLEHWHS. Trp797 is a binding site for substrate. Residues Asn805 and Lys822 each coordinate Mo-bis(molybdopterin guanine dinucleotide).

Belongs to the prokaryotic molybdopterin-containing oxidoreductase family. NasA/NapA/NarB subfamily. As to quaternary structure, component of the periplasmic nitrate reductase NapAB complex composed of NapA and NapB. It depends on [4Fe-4S] cluster as a cofactor. Mo-bis(molybdopterin guanine dinucleotide) serves as cofactor. Post-translationally, predicted to be exported by the Tat system. The position of the signal peptide cleavage has not been experimentally proven.

The protein resides in the periplasm. It carries out the reaction 2 Fe(II)-[cytochrome] + nitrate + 2 H(+) = 2 Fe(III)-[cytochrome] + nitrite + H2O. In terms of biological role, catalytic subunit of the periplasmic nitrate reductase complex NapAB. Receives electrons from NapB and catalyzes the reduction of nitrate to nitrite. The sequence is that of Periplasmic nitrate reductase from Cupriavidus pinatubonensis (strain JMP 134 / LMG 1197) (Cupriavidus necator (strain JMP 134)).